A 654-amino-acid polypeptide reads, in one-letter code: Translation factor GUF1, mitochondrial (654 aa).

One can recognise a tr-type G domain in the interval 57–237 (ENYRNFSIVA…SVIKNIPSPV (181 aa)). Residues 66 to 73 (AHVDHGKS), 130 to 134 (DTPGH), and 184 to 187 (NKID) each bind GTP.

Belongs to the TRAFAC class translation factor GTPase superfamily. Classic translation factor GTPase family. LepA subfamily.

It is found in the mitochondrion inner membrane. It catalyses the reaction GTP + H2O = GDP + phosphate + H(+). Promotes mitochondrial protein synthesis. May act as a fidelity factor of the translation reaction, by catalyzing a one-codon backward translocation of tRNAs on improperly translocated ribosomes. Binds to mitochondrial ribosomes in a GTP-dependent manner. In Candida albicans (strain WO-1) (Yeast), this protein is Translation factor GUF1, mitochondrial.